The following is a 647-amino-acid chain: Calmodulin-binding protein 60 B (647 aa).

Residues 1–10 (MMDSGNNNMN) show a composition bias toward polar residues. The tract at residues 1–26 (MMDSGNNNMNRAKRNLDGNDDDQPER) is disordered. A calmodulin-binding region spans residues 8-85 (NMNRAKRNLD…TGSSGSSPKR (78 aa)). Positions 12-19 (AKRNLDGN) match the Nuclear localization signal motif. The segment at 155–278 (EDDEDWTQEE…AFHKKLTAEG (124 aa)) is DNA-binding.

It belongs to the plant ACBP60 protein family. As to quaternary structure, interacts with calmodulin (CaM). As to expression, expressed in leaves, stems, flowers, developing seeds and root.

It is found in the nucleus. Functionally, transcription activator that binds DNA in a sequence-specific manner, likely 5'-GAAATTTTGG-3', to promote the expression of target genes. This chain is Calmodulin-binding protein 60 B, found in Arabidopsis thaliana (Mouse-ear cress).